The following is a 328-amino-acid chain: Tetraacyldisaccharide 4'-kinase (328 aa).

Position 55 to 62 (55 to 62) interacts with ATP; it reads TAGGNGKT.

Belongs to the LpxK family.

It carries out the reaction a lipid A disaccharide + ATP = a lipid IVA + ADP + H(+). It participates in glycolipid biosynthesis; lipid IV(A) biosynthesis; lipid IV(A) from (3R)-3-hydroxytetradecanoyl-[acyl-carrier-protein] and UDP-N-acetyl-alpha-D-glucosamine: step 6/6. Its function is as follows. Transfers the gamma-phosphate of ATP to the 4'-position of a tetraacyldisaccharide 1-phosphate intermediate (termed DS-1-P) to form tetraacyldisaccharide 1,4'-bis-phosphate (lipid IVA). This Yersinia pseudotuberculosis serotype I (strain IP32953) protein is Tetraacyldisaccharide 4'-kinase.